The primary structure comprises 156 residues: Ribosomal RNA large subunit methyltransferase H (156 aa).

Residues L73, G104, and 123-128 (LSPLTM) contribute to the S-adenosyl-L-methionine site.

Belongs to the RNA methyltransferase RlmH family. In terms of assembly, homodimer.

The protein localises to the cytoplasm. It catalyses the reaction pseudouridine(1915) in 23S rRNA + S-adenosyl-L-methionine = N(3)-methylpseudouridine(1915) in 23S rRNA + S-adenosyl-L-homocysteine + H(+). Its function is as follows. Specifically methylates the pseudouridine at position 1915 (m3Psi1915) in 23S rRNA. The sequence is that of Ribosomal RNA large subunit methyltransferase H from Proteus mirabilis (strain HI4320).